A 231-amino-acid polypeptide reads, in one-letter code: Large ribosomal subunit protein uL1 (231 aa).

It belongs to the universal ribosomal protein uL1 family. In terms of assembly, part of the 50S ribosomal subunit.

Its function is as follows. Binds directly to 23S rRNA. The L1 stalk is quite mobile in the ribosome, and is involved in E site tRNA release. Functionally, protein L1 is also a translational repressor protein, it controls the translation of the L11 operon by binding to its mRNA. The protein is Large ribosomal subunit protein uL1 of Alcanivorax borkumensis (strain ATCC 700651 / DSM 11573 / NCIMB 13689 / SK2).